Reading from the N-terminus, the 291-residue chain is T-cell leukemia homeobox protein 3 (291 aa).

The segment at Met-1–Tyr-56 is disordered. Positions Arg-166–Thr-225 form a DNA-binding region, homeobox.

The protein resides in the nucleus. The chain is T-cell leukemia homeobox protein 3 (TLX3) from Homo sapiens (Human).